A 251-amino-acid polypeptide reads, in one-letter code: Phosphate import ATP-binding protein PstB 2 (251 aa).

In terms of domain architecture, ABC transporter spans 5–246 (LTTENLSLFY…PVKQETNDYI (242 aa)). 37 to 44 (GPSGCGKS) contributes to the ATP binding site.

It belongs to the ABC transporter superfamily. Phosphate importer (TC 3.A.1.7) family. As to quaternary structure, the complex is composed of two ATP-binding proteins (PstB), two transmembrane proteins (PstC and PstA) and a solute-binding protein (PstS).

The protein localises to the cell membrane. It catalyses the reaction phosphate(out) + ATP + H2O = ADP + 2 phosphate(in) + H(+). Part of the ABC transporter complex PstSACB involved in phosphate import. Responsible for energy coupling to the transport system. The sequence is that of Phosphate import ATP-binding protein PstB 2 from Lactiplantibacillus plantarum (strain ATCC BAA-793 / NCIMB 8826 / WCFS1) (Lactobacillus plantarum).